The following is a 222-amino-acid chain: uncharacterized protein (222 aa).

This is an uncharacterized protein from Archaeoglobus fulgidus (strain ATCC 49558 / DSM 4304 / JCM 9628 / NBRC 100126 / VC-16).